The sequence spans 653 residues: 1-deoxy-D-xylulose-5-phosphate synthase (653 aa).

Thiamine diphosphate is bound by residues His-86 and 127-129 (GHS). Residue Asp-158 participates in Mg(2+) binding. Thiamine diphosphate-binding positions include 159 to 160 (GA), Asn-187, and Phe-294. Asn-187 contacts Mg(2+). The span at 309 to 324 (KLEKTTSEPPPKKEPR) shows a compositional bias: basic and acidic residues. The disordered stretch occupies residues 309–343 (KLEKTTSEPPPKKEPRSPNAATAEPEAQPKPQPKP). Glu-395 is a binding site for thiamine diphosphate.

The protein belongs to the transketolase family. DXPS subfamily. In terms of assembly, homodimer. The cofactor is Mg(2+). It depends on thiamine diphosphate as a cofactor.

It carries out the reaction D-glyceraldehyde 3-phosphate + pyruvate + H(+) = 1-deoxy-D-xylulose 5-phosphate + CO2. Its pathway is metabolic intermediate biosynthesis; 1-deoxy-D-xylulose 5-phosphate biosynthesis; 1-deoxy-D-xylulose 5-phosphate from D-glyceraldehyde 3-phosphate and pyruvate: step 1/1. Functionally, catalyzes the acyloin condensation reaction between C atoms 2 and 3 of pyruvate and glyceraldehyde 3-phosphate to yield 1-deoxy-D-xylulose-5-phosphate (DXP). This Chromohalobacter salexigens (strain ATCC BAA-138 / DSM 3043 / CIP 106854 / NCIMB 13768 / 1H11) protein is 1-deoxy-D-xylulose-5-phosphate synthase.